Reading from the N-terminus, the 230-residue chain is 3-beta-hydroxysteroid-Delta(8),Delta(7)-isomerase (230 aa).

Thr-2 carries the N-acetylthreonine modification. The next 4 helical transmembrane spans lie at 29–49 (WHIL…TWLL), 66–86 (LCWF…FSFY), 121–141 (MESV…IAFL), and 185–205 (FWFY…ILVF). In terms of domain architecture, EXPERA spans 61-204 (GRRLALCWFA…IWLVIPGILV (144 aa)).

This sequence belongs to the EBP family. In terms of tissue distribution, expressed in liver.

The protein localises to the endoplasmic reticulum membrane. It localises to the nucleus envelope. The protein resides in the cytoplasmic vesicle. It carries out the reaction lathosterol = 5alpha-cholest-8-en-3beta-ol. It catalyses the reaction zymosterol = 5alpha-cholesta-7,24-dien-3beta-ol. The enzyme catalyses 5,6alpha-epoxy-5alpha-cholestan-3beta-ol + H2O = 5alpha-cholestane-3beta,5,6beta-triol. The catalysed reaction is 5,6beta-epoxy-5beta-cholestan-3beta-ol + H2O = 5alpha-cholestane-3beta,5,6beta-triol. Its pathway is steroid biosynthesis; cholesterol biosynthesis. With respect to regulation, enzymatic activity is induced by 25-hydroxycholesterol, cholestyramine and lovastatin. Functionally, isomerase that catalyzes the conversion of Delta(8)-sterols to their corresponding Delta(7)-isomers. In terms of biological role, component of the microsomal antiestrogen binding site (AEBS), a multiproteic complex at the ER membrane that consists of an association between EBP and 7-dehydrocholesterol reductase/DHCR7. This complex is responsible for cholesterol-5,6-epoxide hydrolase (ChEH) activity, which consists in the hydration of cholesterol-5,6-epoxides (5,6-EC) into cholestane-3beta,5alpha,6beta-triol (CT). The precise role of each component of this complex has not been described yet. The polypeptide is 3-beta-hydroxysteroid-Delta(8),Delta(7)-isomerase (Rattus norvegicus (Rat)).